We begin with the raw amino-acid sequence, 453 residues long: Ribulose bisphosphate carboxylase large chain (453 aa).

Positions 1-2 (MS) are excised as a propeptide. Position 3 is an N-acetylproline (P3). K14 bears the N6,N6,N6-trimethyllysine mark. The substrate site is built by N123 and T173. Catalysis depends on K175, which acts as the Proton acceptor. K177 contacts substrate. Mg(2+) contacts are provided by K201, D203, and E204. K201 bears the N6-carboxylysine mark. The active-site Proton acceptor is H294. R295, H327, and S379 together coordinate substrate.

The protein belongs to the RuBisCO large chain family. Type I subfamily. Heterohexadecamer of 8 large chains and 8 small chains; disulfide-linked. The disulfide link is formed within the large subunit homodimers. It depends on Mg(2+) as a cofactor. Post-translationally, the disulfide bond which can form in the large chain dimeric partners within the hexadecamer appears to be associated with oxidative stress and protein turnover.

Its subcellular location is the plastid. It localises to the chloroplast. It catalyses the reaction 2 (2R)-3-phosphoglycerate + 2 H(+) = D-ribulose 1,5-bisphosphate + CO2 + H2O. It carries out the reaction D-ribulose 1,5-bisphosphate + O2 = 2-phosphoglycolate + (2R)-3-phosphoglycerate + 2 H(+). RuBisCO catalyzes two reactions: the carboxylation of D-ribulose 1,5-bisphosphate, the primary event in carbon dioxide fixation, as well as the oxidative fragmentation of the pentose substrate in the photorespiration process. Both reactions occur simultaneously and in competition at the same active site. The sequence is that of Ribulose bisphosphate carboxylase large chain from Crucianella angustifolia (Narrow-leaved crosswort).